Consider the following 82-residue polypeptide: Small ribosomal subunit protein bS16 (82 aa).

This sequence belongs to the bacterial ribosomal protein bS16 family.

In Actinobacillus pleuropneumoniae serotype 5b (strain L20), this protein is Small ribosomal subunit protein bS16.